The following is a 162-amino-acid chain: Large ribosomal subunit protein uL10 (162 aa).

The protein belongs to the universal ribosomal protein uL10 family. As to quaternary structure, part of the ribosomal stalk of the 50S ribosomal subunit. The N-terminus interacts with L11 and the large rRNA to form the base of the stalk. The C-terminus forms an elongated spine to which L12 dimers bind in a sequential fashion forming a multimeric L10(L12)X complex.

Functionally, forms part of the ribosomal stalk, playing a central role in the interaction of the ribosome with GTP-bound translation factors. In Borrelia garinii subsp. bavariensis (strain ATCC BAA-2496 / DSM 23469 / PBi) (Borreliella bavariensis), this protein is Large ribosomal subunit protein uL10.